The primary structure comprises 314 residues: 3'-5' exoribonuclease YhaM (314 aa).

Residues 163–279 (HVVSMLDLAK…LHYIDNLDAK (117 aa)) enclose the HD domain.

Belongs to the YhaM family.

Shows a 3'-5' exoribonuclease activity. This Bacillus cereus (strain G9842) protein is 3'-5' exoribonuclease YhaM.